Consider the following 393-residue polypeptide: SET domain-containing protein DDB_G0283443 (393 aa).

The SET domain maps to Lys-17 to Ile-312.

The protein belongs to the class V-like SAM-binding methyltransferase superfamily.

Functionally, probable methyltransferase. In Dictyostelium discoideum (Social amoeba), this protein is SET domain-containing protein DDB_G0283443.